Reading from the N-terminus, the 212-residue chain is Glycerol-3-phosphate acyltransferase (212 aa).

5 consecutive transmembrane segments (helical) span residues 3-23 (ILLA…VIVS), 51-71 (KAAI…VWLA), 78-98 (DVAV…PVFF), 115-135 (AVHP…AFFF), and 139-159 (SLAA…LFGT).

Belongs to the PlsY family. In terms of assembly, probably interacts with PlsX.

It is found in the cell inner membrane. The catalysed reaction is an acyl phosphate + sn-glycerol 3-phosphate = a 1-acyl-sn-glycero-3-phosphate + phosphate. The protein operates within lipid metabolism; phospholipid metabolism. Catalyzes the transfer of an acyl group from acyl-phosphate (acyl-PO(4)) to glycerol-3-phosphate (G3P) to form lysophosphatidic acid (LPA). This enzyme utilizes acyl-phosphate as fatty acyl donor, but not acyl-CoA or acyl-ACP. The protein is Glycerol-3-phosphate acyltransferase of Burkholderia vietnamiensis (strain G4 / LMG 22486) (Burkholderia cepacia (strain R1808)).